Here is a 223-residue protein sequence, read N- to C-terminus: NLP effector protein 3 (223 aa).

The short motif at 90-100 is the Conserved undecapeptide motif element; sequence AIMYVWYFPKD. The Conserved heptapeptide motif motif lies at 107 to 113; sequence GHRHDWE.

It belongs to the Necrosis inducing protein (NPP1) family.

It localises to the secreted. Its subcellular location is the host cytoplasm. Its function is as follows. Probable secreted effector that may act as a pathogen-associated molecular pattern (PAMP) recognized by the plant immune system. Seems not to induce necrosis, neither in several susceptible or resistant Vitis species nor in the dicot model plant Nicotiana benthamiana. The polypeptide is NLP effector protein 3 (Plasmopara viticola (Downy mildew of grapevine)).